The primary structure comprises 272 residues: Shikimate dehydrogenase (NADP(+)) (272 aa).

Residues 14 to 16 (SKS) and T61 contribute to the shikimate site. Residue K65 is the Proton acceptor of the active site. E77 is an NADP(+) binding site. N86 and D102 together coordinate shikimate. NADP(+) is bound by residues 126–130 (GAGGA), 150–155 (NRTFSK), and M213. Y215 contributes to the shikimate binding site. Residue G237 participates in NADP(+) binding.

Belongs to the shikimate dehydrogenase family. Homodimer.

The enzyme catalyses shikimate + NADP(+) = 3-dehydroshikimate + NADPH + H(+). It participates in metabolic intermediate biosynthesis; chorismate biosynthesis; chorismate from D-erythrose 4-phosphate and phosphoenolpyruvate: step 4/7. Involved in the biosynthesis of the chorismate, which leads to the biosynthesis of aromatic amino acids. Catalyzes the reversible NADPH linked reduction of 3-dehydroshikimate (DHSA) to yield shikimate (SA). The protein is Shikimate dehydrogenase (NADP(+)) of Psychromonas ingrahamii (strain DSM 17664 / CCUG 51855 / 37).